The primary structure comprises 279 residues: Fatty acid metabolism regulator protein (279 aa).

The HTH gntR-type domain maps to 6 to 74 (KSPAGFAEKY…HGKPTKVNQF (69 aa)). A DNA-binding region (H-T-H motif) is located at residues 34–53 (ERELSELIGVTRTTLREVLQ).

As to quaternary structure, homodimer.

It is found in the cytoplasm. In terms of biological role, multifunctional regulator of fatty acid metabolism. The chain is Fatty acid metabolism regulator protein from Vibrio vulnificus (strain CMCP6).